Here is a 596-residue protein sequence, read N- to C-terminus: mRNA export factor mex67 (596 aa).

Phosphoserine is present on residues Ser-128, Ser-130, and Ser-133. 3 LRR repeats span residues 215-236, 241-262, and 263-282; these read DVIS…TTLA, KLLN…DPWS, and PKTK…PIVT. The LRRCT domain maps to 283–338; that stretch reads TFANRAMDYQREMVSRFPKLRLLDGNSINSEIIASQSTVPFPVYQSFFDKVETEQI. Positions 338–499 constitute an NTF2 domain; the sequence is IVNSFLAAFF…ILIINDLLVI (162 aa). A TAP-C domain is found at 543-596; that stretch reads DTRQQIVLKIKAETGLNDYYAHMCCEQNNWDYNSALASFLELKSRNVIPAEAFS.

This sequence belongs to the NXF family. In terms of assembly, interacts with mlo3 and rae1.

It is found in the nucleus. The protein localises to the cytoplasm. Its function is as follows. Involved in the export of mRNA from the nucleus to the cytoplasm. This is mRNA export factor mex67 (mex67) from Schizosaccharomyces pombe (strain 972 / ATCC 24843) (Fission yeast).